The chain runs to 551 residues: E3 ubiquitin-protein ligase TRIM8 (551 aa).

An RING-type zinc finger spans residues 15–56 (CPICLHVFVEPVQLPCKHNFCRGCIGEAWAKDSGLVRCPECN). 2 consecutive B box-type zinc fingers follow at residues 92 to 132 (CVFC…ARGH) and 140 to 182 (VRAW…VCDV). The stretch at 181-249 (DVEIRRNEIR…HQLLDEDLRQ (69 aa)) forms a coiled coil.

It belongs to the TRIM/RBCC family. As to quaternary structure, homodimer. Interacts with SOCS1 (via) SH2 domain and SOCS box. Interacts with HSP90AB1; prevents nucleus translocation of phosphorylated STAT3 and HSP90AB1. Interacts with MAP3K7/TAK1. Interacts with PIAS3. Interacts with TICAM1. Interacts with TRIM15; this interaction prevents TRIM8 cytoplasmic translocation. In terms of tissue distribution, widely expressed. Expressed in glomerular podocytes of kidneys.

The protein resides in the cytoplasm. It is found in the nucleus. Its subcellular location is the nuclear body. The enzyme catalyses S-ubiquitinyl-[E2 ubiquitin-conjugating enzyme]-L-cysteine + [acceptor protein]-L-lysine = [E2 ubiquitin-conjugating enzyme]-L-cysteine + N(6)-ubiquitinyl-[acceptor protein]-L-lysine.. It participates in protein modification; protein ubiquitination. Its function is as follows. E3 ubiquitin-protein ligase that participates in multiple biological processes including cell survival, differentiation, apoptosis, and in particular, the innate immune response. Participates in the activation of interferon-gamma signaling by promoting proteasomal degradation of the repressor SOCS1. Plays a positive role in the TNFalpha and IL-1beta signaling pathways. Mechanistically, induces the 'Lys-63'-linked polyubiquitination of MAP3K7/TAK1 component leading to the activation of NF-kappa-B. Also modulates STAT3 activity through negative regulation of PIAS3, either by degradation of PIAS3 through the ubiquitin-proteasome pathway or exclusion of PIAS3 from the nucleus. Negatively regulates TLR3/4-mediated innate immune response by catalyzing 'Lys-6'- and 'Lys-33'-linked polyubiquitination of TICAM1 and thereby disrupting the TICAM1-TBK1 interaction. The protein is E3 ubiquitin-protein ligase TRIM8 (TRIM8) of Homo sapiens (Human).